Here is a 356-residue protein sequence, read N- to C-terminus: DNA integrity scanning protein DisA (356 aa).

Residues 11–149 (VHTMRDTLQR…EGKSHILEEP (139 aa)) form the DAC domain. ATP is bound by residues Gly-78, Leu-96, and 109–113 (TRHRS).

Belongs to the DisA family. In terms of assembly, homooctamer. Requires Mg(2+) as cofactor.

The enzyme catalyses 2 ATP = 3',3'-c-di-AMP + 2 diphosphate. Participates in a DNA-damage check-point. DisA forms globular foci that rapidly scan along the chromosomes searching for lesions. Its function is as follows. Also has diadenylate cyclase activity, catalyzing the condensation of 2 ATP molecules into cyclic di-AMP (c-di-AMP). c-di-AMP likely acts as a signaling molecule that may couple DNA integrity with a cellular process. The sequence is that of DNA integrity scanning protein DisA from Corynebacterium efficiens (strain DSM 44549 / YS-314 / AJ 12310 / JCM 11189 / NBRC 100395).